Reading from the N-terminus, the 34-residue chain is Photosystem II reaction center protein M (34 aa).

The helical transmembrane segment at 6–26 (LGAIATALFVFIPCVFLILLY) threads the bilayer.

The protein belongs to the PsbM family. As to quaternary structure, PSII is composed of 1 copy each of membrane proteins PsbA, PsbB, PsbC, PsbD, PsbE, PsbF, PsbH, PsbI, PsbJ, PsbK, PsbL, PsbM, PsbT, PsbX, PsbY, PsbZ, Psb30/Ycf12, peripheral proteins PsbO, CyanoQ (PsbQ), PsbU, PsbV and a large number of cofactors. It forms dimeric complexes.

The protein resides in the cellular thylakoid membrane. Its function is as follows. One of the components of the core complex of photosystem II (PSII). PSII is a light-driven water:plastoquinone oxidoreductase that uses light energy to abstract electrons from H(2)O, generating O(2) and a proton gradient subsequently used for ATP formation. It consists of a core antenna complex that captures photons, and an electron transfer chain that converts photonic excitation into a charge separation. This subunit is found at the monomer-monomer interface. The protein is Photosystem II reaction center protein M of Acaryochloris marina (strain MBIC 11017).